A 572-amino-acid chain; its full sequence is Proline--tRNA ligase (572 aa).

The protein belongs to the class-II aminoacyl-tRNA synthetase family. ProS type 1 subfamily. Homodimer.

It is found in the cytoplasm. The catalysed reaction is tRNA(Pro) + L-proline + ATP = L-prolyl-tRNA(Pro) + AMP + diphosphate. Functionally, catalyzes the attachment of proline to tRNA(Pro) in a two-step reaction: proline is first activated by ATP to form Pro-AMP and then transferred to the acceptor end of tRNA(Pro). As ProRS can inadvertently accommodate and process non-cognate amino acids such as alanine and cysteine, to avoid such errors it has two additional distinct editing activities against alanine. One activity is designated as 'pretransfer' editing and involves the tRNA(Pro)-independent hydrolysis of activated Ala-AMP. The other activity is designated 'posttransfer' editing and involves deacylation of mischarged Ala-tRNA(Pro). The misacylated Cys-tRNA(Pro) is not edited by ProRS. The protein is Proline--tRNA ligase of Bacillus licheniformis (strain ATCC 14580 / DSM 13 / JCM 2505 / CCUG 7422 / NBRC 12200 / NCIMB 9375 / NCTC 10341 / NRRL NRS-1264 / Gibson 46).